The chain runs to 372 residues: Probable NADH-dependent flavin oxidoreductase YqiG (372 aa).

It belongs to the NADH:flavin oxidoreductase/NADH oxidase family.

This Bacillus subtilis (strain 168) protein is Probable NADH-dependent flavin oxidoreductase YqiG (yqiG).